A 574-amino-acid chain; its full sequence is Ankyrin repeat protein B18 (574 aa).

ANK repeat units follow at residues 56–87 (TGYTALHCYLYNNYFTNDVLKILLNHDVNVTM), 135–164 (IKSRYMLLKEEDIDENIVSTLLDKGIDPNF), 167–213 (DGYT…NLNA), 217–249 (CGNTPFHLYLSIEMCNNIHMTKMLLTFNPNFKI), 253–285 (HGLTPILCYITSDYIQHDILVMLIHHYETNVGE), and 327–356 (EGKTLLHVACEYNNTQVIDYLIRINGDINA). Positions 541–574 (NCLLTLLPSEIIYEILYMLTINDLYNISYPPTKV) constitute an F-box domain.

This chain is Ankyrin repeat protein B18, found in Homo sapiens (Human).